We begin with the raw amino-acid sequence, 300 residues long: Bifunctional protein FolD (300 aa).

NADP(+) contacts are provided by residues 168–170 (GRS), serine 193, and isoleucine 234.

The protein belongs to the tetrahydrofolate dehydrogenase/cyclohydrolase family. As to quaternary structure, homodimer.

It carries out the reaction (6R)-5,10-methylene-5,6,7,8-tetrahydrofolate + NADP(+) = (6R)-5,10-methenyltetrahydrofolate + NADPH. The catalysed reaction is (6R)-5,10-methenyltetrahydrofolate + H2O = (6R)-10-formyltetrahydrofolate + H(+). It functions in the pathway one-carbon metabolism; tetrahydrofolate interconversion. In terms of biological role, catalyzes the oxidation of 5,10-methylenetetrahydrofolate to 5,10-methenyltetrahydrofolate and then the hydrolysis of 5,10-methenyltetrahydrofolate to 10-formyltetrahydrofolate. In Ehrlichia ruminantium (strain Welgevonden), this protein is Bifunctional protein FolD.